The primary structure comprises 254 residues: Stem 31 kDa glycoprotein (254 aa).

The first 20 residues, 1-20 (MKLFVFFVAAVVLVAWPCHG), serve as a signal peptide directing secretion. Positions 21-35 (AGYQRFPLRMKTGYG) are excised as a propeptide. Asparagine 130 carries N-linked (GlcNAc...) asparagine glycosylation.

The protein belongs to the APS1/VSP family. As to expression, accumulates in the stems of developing soybean seedlings.

May function as somatic storage protein during early seedling development. The sequence is that of Stem 31 kDa glycoprotein (VSPB) from Glycine max (Soybean).